The following is a 164-amino-acid chain: uncharacterized protein (164 aa).

A disordered region spans residues 107–136; sequence QSESGGSGSNSRSSSDTTEPTDPPAPVRKT.

This is an uncharacterized protein from Escherichia coli (Bacteriophage T4).